We begin with the raw amino-acid sequence, 642 residues long: Ribosome biogenesis protein BOP1 homolog (642 aa).

The tract at residues 1–28 (MIHKRMNSTELERTSKKIDDYDSSDEED) is disordered. Basic and acidic residues predominate over residues 10 to 20 (ELERTSKKIDD). WD repeat units lie at residues 311-351 (GHSG…CLKT), 353-393 (SLDG…DRHR), 472-510 (RLKG…LKKK), 513-552 (TGSQ…KPWK), 556-595 (HHTA…DSLK), and 612-642 (KNGL…ALFT).

The protein belongs to the WD repeat BOP1/ERB1 family.

It localises to the nucleus. It is found in the nucleolus. The protein resides in the nucleoplasm. Its function is as follows. Required for maturation of ribosomal RNAs and formation of the large ribosomal subunit. The chain is Ribosome biogenesis protein BOP1 homolog from Brugia malayi (Filarial nematode worm).